The chain runs to 104 residues: Small ribosomal subunit protein uS10 (104 aa).

Belongs to the universal ribosomal protein uS10 family. As to quaternary structure, part of the 30S ribosomal subunit.

In terms of biological role, involved in the binding of tRNA to the ribosomes. The protein is Small ribosomal subunit protein uS10 of Ralstonia nicotianae (strain ATCC BAA-1114 / GMI1000) (Ralstonia solanacearum).